Here is a 188-residue protein sequence, read N- to C-terminus: MFHQIWAALLYFYGIILNSIYQCPEHSQLTTLGVDGKEFPEVHLGQWYFIAGAAPTKEELATFDPVDNIIFNMAAGSAPTQLHLRATIRMKDGLCVPRKWIYHLTEGSTDLRTEGRPDMKTELFSSSCPGGIMLNETGQGYQRFLFYNRSPHPPEKCVEEFKSLTSCLDSKAFLLTPRNQEACELSSN.

The not cleaved signal peptide spans 1–22 (MFHQIWAALLYFYGIILNSIYQ). 3 disulfides stabilise this stretch: Cys23-Cys167, Cys95-Cys183, and Cys128-Cys157. N-linked (GlcNAc...) asparagine glycosylation is present at Asn135. Residues Glu136 and Arg143 each contribute to the tetradecanoate site.

This sequence belongs to the calycin superfamily. Lipocalin family. Highly divergent. In terms of assembly, interacts with LRP2; LRP2 mediates APOM renal uptake and subsequent lysosomal degradation.

It is found in the secreted. In terms of biological role, probably involved in lipid transport. Can bind sphingosine-1-phosphate, myristic acid, palmitic acid and stearic acid, retinol, all-trans-retinoic acid and 9-cis-retinoic acid. This Pongo abelii (Sumatran orangutan) protein is Apolipoprotein M (APOM).